We begin with the raw amino-acid sequence, 222 residues long: 7-cyano-7-deazaguanine synthase (222 aa).

14–24 (FSGGQDSTTCL) is an ATP binding site. 4 residues coordinate Zn(2+): Cys190, Cys199, Cys202, and Cys205.

This sequence belongs to the QueC family. As to quaternary structure, homodimer. Zn(2+) is required as a cofactor.

The catalysed reaction is 7-carboxy-7-deazaguanine + NH4(+) + ATP = 7-cyano-7-deazaguanine + ADP + phosphate + H2O + H(+). It participates in purine metabolism; 7-cyano-7-deazaguanine biosynthesis. Functionally, catalyzes the ATP-dependent conversion of 7-carboxy-7-deazaguanine (CDG) to 7-cyano-7-deazaguanine (preQ(0)). This Staphylococcus aureus (strain Mu3 / ATCC 700698) protein is 7-cyano-7-deazaguanine synthase.